The chain runs to 309 residues: MFGRHSIIPNNQIGTASASAGEDHVSASATSGHIPYDDMEEIPHPDSIYGAASDLIPDGSQLVAHRSDGSELLVSRPPEGANQLTISFRGQVYVFDAVGADKVDAVLSLLGGSTELAPGPQVMELAQQQNHMPVVEYQSRCSLPQRAQSLDRFRKKRNARCFEKKVRYGVRQEVALRMARNKGQFTSSKMTDGAYNSGTDQDSAQDDAHPEISCTHCGISSKCTPMMRRGPSGPRTLCNACGLFWANRGTLRDLSKKTEENQLALMKPDDGGSVADAANNLNTEAASVEEHTSMVSLANGDNSNLLGDH.

Positions 1-35 are disordered; sequence MFGRHSIIPNNQIGTASASAGEDHVSASATSGHIP. Residues 8–18 show a composition bias toward polar residues; that stretch reads IPNNQIGTASA. The Tify domain maps to 77-112; sequence PPEGANQLTISFRGQVYVFDAVGADKVDAVLSLLGG. The CCT domain occupies 146–188; sequence RAQSLDRFRKKRNARCFEKKVRYGVRQEVALRMARNKGQFTSS. The span at 187 to 202 shows a compositional bias: polar residues; that stretch reads SSKMTDGAYNSGTDQD. A disordered region spans residues 187-207; the sequence is SSKMTDGAYNSGTDQDSAQDD. The segment at 208–267 adopts a GATA-type zinc-finger fold; sequence AHPEISCTHCGISSKCTPMMRRGPSGPRTLCNACGLFWANRGTLRDLSKKTEENQLALMK. Positions 290–309 are disordered; sequence EHTSMVSLANGDNSNLLGDH. Positions 293–309 are enriched in polar residues; it reads SMVSLANGDNSNLLGDH.

It belongs to the type IV zinc-finger family. Class C subfamily. Predominantly expressed in shoot apices, inflorescences and roots.

The protein resides in the nucleus. In terms of biological role, transcriptional activator that specifically binds 5'-GATA-3' or 5'-GAT-3' motifs within gene promoters. The protein is GATA transcription factor 25 (GATA25) of Arabidopsis thaliana (Mouse-ear cress).